We begin with the raw amino-acid sequence, 156 residues long: Arginine repressor (156 aa).

It belongs to the ArgR family.

The protein localises to the cytoplasm. It participates in amino-acid biosynthesis; L-arginine biosynthesis [regulation]. In terms of biological role, regulates arginine biosynthesis genes. In Salmonella agona (strain SL483), this protein is Arginine repressor.